Consider the following 648-residue polypeptide: Interferon-induced GTP-binding protein Mx1 (648 aa).

Residue M1 is modified to N-acetylmethionine. A disordered region spans residues 1–26 (MVHSDLGIEELDSPESSLNGSEDMES). Residues 56–329 (DLALPAIAVI…LIMHICKTLP (274 aa)) form the Dynamin-type G domain. Positions 66–73 (GDQSSGKS) are G1 motif. 66 to 73 (GDQSSGKS) is a GTP binding site. Positions 91–93 (VTR) are G2 motif. The interval 167–170 (DLPG) is G3 motif. Residues 167-171 (DLPGI) and 236-239 (TKPD) each bind GTP. The segment at 236–239 (TKPD) is G4 motif. The G5 motif stretch occupies residues 268-271 (KCRG). Residues 330–355 (LLENQIKETHQRITEELQKYGKDIPE) are bundle signaling element (BSE). A middle domain region spans residues 355 to 522 (EEESEKMFCL…HFQMEQLVYC (168 aa)). The stalk stretch occupies residues 356-618 (EESEKMFCLI…KDQYDWLLKE (263 aa)). A critical for lipid-binding region spans residues 543-546 (KNKK). The GED domain maps to 560–648 (TDEIFQHLTA…ARQRLAKFPG (89 aa)).

Belongs to the TRAFAC class dynamin-like GTPase superfamily. Dynamin/Fzo/YdjA family. Homooligomer. Oligomerizes into multimeric filamentous or ring-like structures by virtue of its stalk domain. Oligomerization is critical for GTPase activity, protein stability, and recognition of viral target structures. Interacts with TRPC1, TRPC3, TRPC4, TRPC5, TRPC6 and TRPC7. Interacts with HSPA5. Interacts with TUBB/TUBB5. Interacts with DDX39A and DDX39B. In terms of processing, ISGylated. As to expression, ubiquitously expressed.

The protein resides in the cytoplasm. It is found in the endoplasmic reticulum membrane. It localises to the perinuclear region. Its subcellular location is the nucleus. Functionally, interferon-induced dynamin-like GTPase with antiviral activity against rabies virus (RABV), vesicular stomatitis virus (VSV) and murine pneumonia virus (MPV). Isoform 1 but not isoform 2 shows antiviral activity against vesicular stomatitis virus (VSV). The chain is Interferon-induced GTP-binding protein Mx1 (MX1) from Bos taurus (Bovine).